Here is a 258-residue protein sequence, read N- to C-terminus: Trypsin (258 aa).

The N-terminal stretch at 1 to 16 (MIRFTLALAVIGVTFA) is a signal peptide. The propeptide at 17–29 (ASTPQIETNPNLE) is activation peptide. The Peptidase S1 domain occupies 30–257 (IIGGHDANII…FRDWINEETE (228 aa)). Cys-55 and Cys-71 form a disulfide bridge. The active-site Charge relay system is the His-70. Residue Asn-110 is glycosylated (N-linked (GlcNAc...) asparagine). Asp-117 serves as the catalytic Charge relay system. N-linked (GlcNAc...) asparagine glycosylation is found at Asn-130 and Asn-188. Disulfide bonds link Cys-182/Cys-197 and Cys-209/Cys-233. The active-site Charge relay system is Ser-213.

This sequence belongs to the peptidase S1 family. As to expression, expressed in larval carcasses and gut, and adult gut.

The protein localises to the secreted. The enzyme catalyses Preferential cleavage: Arg-|-Xaa, Lys-|-Xaa.. The sequence is that of Trypsin from Phaedon cochleariae (Mustard beetle).